Here is a 252-residue protein sequence, read N- to C-terminus: Imidazole glycerol phosphate synthase subunit HisF (252 aa).

Catalysis depends on residues aspartate 11 and aspartate 130.

This sequence belongs to the HisA/HisF family. As to quaternary structure, heterodimer of HisH and HisF.

It localises to the cytoplasm. It carries out the reaction 5-[(5-phospho-1-deoxy-D-ribulos-1-ylimino)methylamino]-1-(5-phospho-beta-D-ribosyl)imidazole-4-carboxamide + L-glutamine = D-erythro-1-(imidazol-4-yl)glycerol 3-phosphate + 5-amino-1-(5-phospho-beta-D-ribosyl)imidazole-4-carboxamide + L-glutamate + H(+). Its pathway is amino-acid biosynthesis; L-histidine biosynthesis; L-histidine from 5-phospho-alpha-D-ribose 1-diphosphate: step 5/9. Its function is as follows. IGPS catalyzes the conversion of PRFAR and glutamine to IGP, AICAR and glutamate. The HisF subunit catalyzes the cyclization activity that produces IGP and AICAR from PRFAR using the ammonia provided by the HisH subunit. In Aromatoleum aromaticum (strain DSM 19018 / LMG 30748 / EbN1) (Azoarcus sp. (strain EbN1)), this protein is Imidazole glycerol phosphate synthase subunit HisF.